The primary structure comprises 690 residues: Glutaminase A (690 aa).

The first 20 residues, 1–20, serve as a signal peptide directing secretion; it reads MMHFLSFCLSVASLVSYAGA. Residues Asn80, Asn96, Asn435, Asn508, Asn528, Asn538, and Asn571 are each glycosylated (N-linked (GlcNAc...) asparagine).

This sequence belongs to the fungal glutaminase gtaA family.

Its subcellular location is the secreted. It carries out the reaction L-glutamine + H2O = L-glutamate + NH4(+). Its activity is regulated as follows. Activity is inhibited by about 80% in the presence of 18% sodium chloride. Glutaminase catalyzes the hydrolysis of glutamine to glutamic acid and plays a key role in nitrogen metabolism. Catalyzes the hydrolysis not only of L-glutamine but also of D-glutamine. The sequence is that of Glutaminase A from Aspergillus oryzae (strain ATCC 42149 / RIB 40) (Yellow koji mold).